Here is a 377-residue protein sequence, read N- to C-terminus: Nitric oxide reductase FlRd-NAD(+) reductase (377 aa).

It belongs to the FAD-dependent oxidoreductase family. The cofactor is FAD.

It localises to the cytoplasm. The enzyme catalyses 2 reduced [nitric oxide reductase rubredoxin domain] + NAD(+) + H(+) = 2 oxidized [nitric oxide reductase rubredoxin domain] + NADH. It participates in nitrogen metabolism; nitric oxide reduction. One of at least two accessory proteins for anaerobic nitric oxide (NO) reductase. Reduces the rubredoxin moiety of NO reductase. This chain is Nitric oxide reductase FlRd-NAD(+) reductase, found in Escherichia coli O7:K1 (strain IAI39 / ExPEC).